We begin with the raw amino-acid sequence, 81 residues long: ATP synthase subunit c (81 aa).

The next 2 helical transmembrane spans lie at 7-27 (FVAL…CIGI) and 53-73 (FLLA…AMMF).

It belongs to the ATPase C chain family. In terms of assembly, F-type ATPases have 2 components, F(1) - the catalytic core - and F(0) - the membrane proton channel. F(1) has five subunits: alpha(3), beta(3), gamma(1), delta(1), epsilon(1). F(0) has three main subunits: a(1), b(2) and c(10-14). The alpha and beta chains form an alternating ring which encloses part of the gamma chain. F(1) is attached to F(0) by a central stalk formed by the gamma and epsilon chains, while a peripheral stalk is formed by the delta and b chains.

The protein resides in the cell inner membrane. Its function is as follows. F(1)F(0) ATP synthase produces ATP from ADP in the presence of a proton or sodium gradient. F-type ATPases consist of two structural domains, F(1) containing the extramembraneous catalytic core and F(0) containing the membrane proton channel, linked together by a central stalk and a peripheral stalk. During catalysis, ATP synthesis in the catalytic domain of F(1) is coupled via a rotary mechanism of the central stalk subunits to proton translocation. Functionally, key component of the F(0) channel; it plays a direct role in translocation across the membrane. A homomeric c-ring of between 10-14 subunits forms the central stalk rotor element with the F(1) delta and epsilon subunits. In Azoarcus sp. (strain BH72), this protein is ATP synthase subunit c.